The primary structure comprises 647 residues: uncharacterized protein (647 aa).

5 helical membrane-spanning segments follow: residues 14 to 38 (LFPI…LAVW), 61 to 78 (VVAL…TTLF), 90 to 110 (LWLT…PAFI), 140 to 158 (LSAV…VIYW), and 178 to 195 (VIAL…RSSF).

The protein resides in the cell membrane. This is an uncharacterized protein from Haemophilus influenzae (strain ATCC 51907 / DSM 11121 / KW20 / Rd).